A 658-amino-acid chain; its full sequence is Translation factor GUF1, mitochondrial (658 aa).

A mitochondrion-targeting transit peptide spans 1–40; that stretch reads MRGCLQTVRWLTSAWQRPPSYPPLSRAAPCRFFNVSIPRN. Positions 60–240 constitute a tr-type G domain; that stretch reads DRFRNFCIVA…TVVEQIPAPV (181 aa). Residues 69 to 76, 133 to 137, and 187 to 190 contribute to the GTP site; these read AHVDHGKS, DTPGH, and NKVD.

It belongs to the TRAFAC class translation factor GTPase superfamily. Classic translation factor GTPase family. LepA subfamily.

The protein localises to the mitochondrion inner membrane. It carries out the reaction GTP + H2O = GDP + phosphate + H(+). In terms of biological role, promotes mitochondrial protein synthesis. May act as a fidelity factor of the translation reaction, by catalyzing a one-codon backward translocation of tRNAs on improperly translocated ribosomes. Binds to mitochondrial ribosomes in a GTP-dependent manner. The protein is Translation factor GUF1, mitochondrial of Paracoccidioides brasiliensis (strain Pb03).